The primary structure comprises 483 residues: Cobyric acid synthase (483 aa).

Residues 248-435 (LLKVVVPVLP…LHGLFETPAA (188 aa)) form the GATase cobBQ-type domain. Catalysis depends on C329, which acts as the Nucleophile. The active site involves H427.

The protein belongs to the CobB/CobQ family. CobQ subfamily.

It functions in the pathway cofactor biosynthesis; adenosylcobalamin biosynthesis. In terms of biological role, catalyzes amidations at positions B, D, E, and G on adenosylcobyrinic A,C-diamide. NH(2) groups are provided by glutamine, and one molecule of ATP is hydrogenolyzed for each amidation. This is Cobyric acid synthase from Pseudomonas fluorescens (strain ATCC BAA-477 / NRRL B-23932 / Pf-5).